The sequence spans 416 residues: Catalase-peroxidase 2 (416 aa).

A signal peptide spans 1–20 (MLLPLIVFLLSVLIHHRIYS).

It belongs to the peroxidase family. Peroxidase/catalase subfamily. Homodimer or homotetramer. Heme b serves as cofactor. Formation of the three residue Trp-Tyr-Met cross-link is important for the catalase, but not the peroxidase activity of the enzyme.

The catalysed reaction is H2O2 + AH2 = A + 2 H2O. It catalyses the reaction 2 H2O2 = O2 + 2 H2O. Functionally, bifunctional enzyme with both catalase and broad-spectrum peroxidase activity. The sequence is that of Catalase-peroxidase 2 (katG2) from Alkaliphilus metalliredigens (strain QYMF).